A 178-amino-acid polypeptide reads, in one-letter code: 2-C-methyl-D-erythritol 2,4-cyclodiphosphate synthase (178 aa).

A divalent metal cation contacts are provided by Asp24, His26, and His61. Position 24-26 (Asp24–His26) interacts with 4-CDP-2-C-methyl-D-erythritol 2-phosphate. Residue Thr150–Glu153 participates in 4-CDP-2-C-methyl-D-erythritol 2-phosphate binding.

The protein belongs to the IspF family. As to quaternary structure, homotrimer. A divalent metal cation serves as cofactor.

It catalyses the reaction 4-CDP-2-C-methyl-D-erythritol 2-phosphate = 2-C-methyl-D-erythritol 2,4-cyclic diphosphate + CMP. It functions in the pathway isoprenoid biosynthesis; isopentenyl diphosphate biosynthesis via DXP pathway; isopentenyl diphosphate from 1-deoxy-D-xylulose 5-phosphate: step 4/6. Functionally, involved in the biosynthesis of isopentenyl diphosphate (IPP) and dimethylallyl diphosphate (DMAPP), two major building blocks of isoprenoid compounds. Catalyzes the conversion of 4-diphosphocytidyl-2-C-methyl-D-erythritol 2-phosphate (CDP-ME2P) to 2-C-methyl-D-erythritol 2,4-cyclodiphosphate (ME-CPP) with a corresponding release of cytidine 5-monophosphate (CMP). This is 2-C-methyl-D-erythritol 2,4-cyclodiphosphate synthase from Chlamydia trachomatis serovar L2b (strain UCH-1/proctitis).